Here is a 458-residue protein sequence, read N- to C-terminus: Siroheme synthase (458 aa).

The segment at 1 to 203 (MDYLPLFFDL…GNLAAAEQLI (203 aa)) is precorrin-2 dehydrogenase /sirohydrochlorin ferrochelatase. NAD(+) contacts are provided by residues 22 to 23 (TI) and 43 to 44 (PK). A Phosphoserine modification is found at Ser-128. The segment at 216-458 (GEVYLVGAGP…RCHEKLNWYK (243 aa)) is uroporphyrinogen-III C-methyltransferase. Pro-225 contacts S-adenosyl-L-methionine. The active-site Proton acceptor is the Asp-248. Lys-270 functions as the Proton donor in the catalytic mechanism. S-adenosyl-L-methionine contacts are provided by residues 301 to 303 (GGD), Ile-306, 331 to 332 (TA), Met-383, and Gly-412.

In the N-terminal section; belongs to the precorrin-2 dehydrogenase / sirohydrochlorin ferrochelatase family. This sequence in the C-terminal section; belongs to the precorrin methyltransferase family.

It carries out the reaction uroporphyrinogen III + 2 S-adenosyl-L-methionine = precorrin-2 + 2 S-adenosyl-L-homocysteine + H(+). It catalyses the reaction precorrin-2 + NAD(+) = sirohydrochlorin + NADH + 2 H(+). The enzyme catalyses siroheme + 2 H(+) = sirohydrochlorin + Fe(2+). The protein operates within cofactor biosynthesis; adenosylcobalamin biosynthesis; precorrin-2 from uroporphyrinogen III: step 1/1. Its pathway is cofactor biosynthesis; adenosylcobalamin biosynthesis; sirohydrochlorin from precorrin-2: step 1/1. It functions in the pathway porphyrin-containing compound metabolism; siroheme biosynthesis; precorrin-2 from uroporphyrinogen III: step 1/1. It participates in porphyrin-containing compound metabolism; siroheme biosynthesis; siroheme from sirohydrochlorin: step 1/1. The protein operates within porphyrin-containing compound metabolism; siroheme biosynthesis; sirohydrochlorin from precorrin-2: step 1/1. Functionally, multifunctional enzyme that catalyzes the SAM-dependent methylations of uroporphyrinogen III at position C-2 and C-7 to form precorrin-2 via precorrin-1. Then it catalyzes the NAD-dependent ring dehydrogenation of precorrin-2 to yield sirohydrochlorin. Finally, it catalyzes the ferrochelation of sirohydrochlorin to yield siroheme. This chain is Siroheme synthase, found in Saccharophagus degradans (strain 2-40 / ATCC 43961 / DSM 17024).